The sequence spans 218 residues: MANSSPVYDWFQERLEIQDIADDISTKYVPPHVNIFYCLGGITLVCFLIQFATGFAMTFYYKPTVAEAYSSVQYLMTDVSFGWLIRSVHRWSASMMVLMLILHVFRVYLTGGFKRPRELTWVTGVTMAVITVSFGVTGYSLPWDQVGYWAVKIVSGVPAAIPVVGDFMVELLRGGESVGQSTLTRFYSLHTFVMPWLLAVFMLMHFLMIRKQGISGPL.

A helical transmembrane segment spans residues 35–55 (IFYCLGGITLVCFLIQFATGF). Residue Cys-38 coordinates heme c. Residues His-89 and His-103 each coordinate heme b. A run of 3 helical transmembrane segments spans residues 93–113 (ASMM…TGGF), 119–139 (LTWV…VTGY), and 189–209 (LHTF…FLMI). 2 residues coordinate heme b: His-190 and His-205.

Belongs to the cytochrome b family. PetB subfamily. As to quaternary structure, the 4 large subunits of the cytochrome b6-f complex are cytochrome b6, subunit IV (17 kDa polypeptide, PetD), cytochrome f and the Rieske protein, while the 4 small subunits are PetG, PetL, PetM and PetN. The complex functions as a dimer. Heme b serves as cofactor. Heme c is required as a cofactor.

It localises to the cellular thylakoid membrane. Component of the cytochrome b6-f complex, which mediates electron transfer between photosystem II (PSII) and photosystem I (PSI), cyclic electron flow around PSI, and state transitions. This chain is Cytochrome b6, found in Parasynechococcus marenigrum (strain WH8102).